The sequence spans 1031 residues: MGPCHGALHPLSLLVQAAALAVALAQGTLPAFLPCELQRHGLVNCDWLFLKSVPHFSAAAPRGNVTSLSLYSNRIHHLHDSDFVHLSSLRRLNLKWNCPPASLSPMHFPCHMTIEPHTFLAVPTLEELNLSYNSITTVPALPSSLVSLSLSRTNILVLDPANLAGLHSLRFLFLDGNCYYKNPCPQALQVAPGALLGLGNLTHLSLKYNNLTAVPRGLPPSLEYLLLSYNHIITLAPEDLANLTALRVLDVGGNCRRCDHARNPCMECPKGFPHLHPDTFSHLNHLEGLVLKDSSLYNLNPRWFHALGNLMVLDLSENFLYDCITKTTAFQGLAQLRRLNLSFNYHKKVSFAHLHLAPSFGSLLSLQQLDMHGIFFRSLSETTLRSLVHLPMLQSLHLQMNFINQAQLSIFGAFPGLRYVDLSDNRISGAMELAAATGEVDGGERVRLPSGDLALGPPGTPSSEGFMPGCKTLNFTLDLSRNNLVTIQPEMFARLSRLQCLLLSRNSISQAVNGSQFMPLTSLQVLDLSHNKLDLYHGRSFTELPRLEALDLSYNSQPFSMQGVGHNLSFVAQLPALRYLSLAHNDIHSRVSQQLCSASLRALDFSGNALSRMWAEGDLYLHFFRGLRSLVRLDLSQNRLHTLLPRTLDNLPKSLRLLRLRDNYLAFFNWSSLVLLPRLEALDLAGNQLKALSNGSLPNGTQLQRLDLSSNSISFVASSFFALATRLRELNLSANALKTVEPSWFGSLAGTLKVLDVTGNPLHCACGAAFVDFLLEVQAAVPGLPGHVKCGSPGQLQGRSIFAQDLRLCLDEALSWDCFGLSLLTVALGLAVPMLHHLCGWDLWYCFHLCLAWLPRRGRRRGADALPYDAFVVFDKAQSAVADWVYNELRVRLEERRGRRALRLCLEERDWLPGKTLFENLWASVYSSRKMLFVLAHTDRVSGLLRASFLLAQQRLLEDRKDVVVLVILRPDAHRSRYVRLRQRLCRQSVLLWPHQPSGQRSFWAQLGTALTRDNQHFYNQNFCRGPTTAE.

An N-terminal signal peptide occupies residues 1-25 (MGPCHGALHPLSLLVQAAALAVALA). Topologically, residues 26-817 (QGTLPAFLPC…LCLDEALSWD (792 aa)) are extracellular. Cysteines 35 and 45 form a disulfide. 47–51 (WLFLK) is a DNA binding site. LRR repeat units follow at residues 62–85 (RGNV…DFVH), 87–110 (SSLR…HFPC), 122–147 (VPTL…SLVS), 150–166 (LSRT…LAGL), 167–190 (HSLR…ALQV), 198–221 (LGNL…LPPS), 223–242 (EYLL…DLAN), 243–268 (LTAL…CMEC), 283–306 (LNHL…WFHA), 308–332 (GNLM…AFQG), 333–356 (LAQL…HLHL), 363–386 (LLSL…TLRS), 390–413 (LPML…IFGA), 415–440 (PGLR…TGEV), 470–494 (CKTL…MFAR), 496–519 (SRLQ…QFMP), 520–543 (LTSL…SFTE), 545–572 (PRLE…SFVA), 574–598 (LPAL…LCSA), 600–622 (LRAL…LYLH), 627–650 (LRSL…TLDN), 652–675 (PKSL…SLVL), 676–699 (LPRL…SLPN), 701–723 (TQLQ…FFAL), 724–747 (ATRL…WFGS), and 749–772 (AGTL…AFVD). Asparagine 64 carries N-linked (GlcNAc...) asparagine glycosylation. Residues 72-77 (SNRIHH) and 95-109 (KWNC…MHFP) each bind DNA. An intrachain disulfide couples cysteine 98 to cysteine 110. Asparagine 129 carries N-linked (GlcNAc...) asparagine glycosylation. DNA contacts are provided by residues tyrosine 132, arginine 152, and 179–181 (YYK). A disulfide bridge links cysteine 178 with cysteine 184. A glycan (N-linked (GlcNAc...) asparagine) is linked at asparagine 200. Tyrosine 208 provides a ligand contact to DNA. N-linked (GlcNAc...) asparagine glycosylation is found at asparagine 210 and asparagine 242. 2 disulfide bridges follow: cysteine 255-cysteine 268 and cysteine 258-cysteine 265. Cysteine 258 is lipidated: S-palmitoyl cysteine. Arginine 262 is a DNA binding site. Cysteine 265 carries the S-palmitoyl cysteine lipid modification. N-linked (GlcNAc...) asparagine glycosylation is present at asparagine 340. A disulfide bond links cysteine 470 and cysteine 500. 2 N-linked (GlcNAc...) asparagine glycosylation sites follow: asparagine 474 and asparagine 513. A glycan (N-linked (GlcNAc...) asparagine) is linked at asparagine 567. N-linked (GlcNAc...) asparagine glycans are attached at residues asparagine 669, asparagine 694, and asparagine 699. The N-linked (GlcNAc...) asparagine glycan is linked to asparagine 731. Intrachain disulfides connect cysteine 764/cysteine 790 and cysteine 766/cysteine 809. Residues 818-838 (CFGLSLLTVALGLAVPMLHHL) form a helical membrane-spanning segment. Residues 839–1031 (CGWDLWYCFH…NFCRGPTTAE (193 aa)) lie on the Cytoplasmic side of the membrane. Residues 866 to 1011 (LPYDAFVVFD…SFWAQLGTAL (146 aa)) form the TIR domain.

Belongs to the Toll-like receptor family. In terms of assembly, monomer and homodimer. Exists as a monomer in the absence of unmethylated cytidine-phosphate-guanosine (CpG) ligand. Proteolytic processing of an insertion loop (Z-loop) is required for homodimerization upon binding to the unmethylated CpG ligand leading to its activation. Interacts with MYD88 via their respective TIR domains. Interacts with BTK. Interacts (via transmembrane domain) with UNC93B1. Interacts with CD300LH; the interaction may promote full activation of TLR9-triggered innate responses. Interacts with CNPY3 and HSP90B1; this interaction is required for proper folding in the endoplasmic reticulum. Interacts with SMPDL3B. Interacts with CD82; this interaction is essential for TLR9-dependent myddosome formation in response to CpG stimulation. Activated by proteolytic cleavage of the flexible loop between repeats LRR14 and LRR15 within the ectodomain. Cleavage requires UNC93B1. Proteolytically processed by first removing the majority of the ectodomain by either asparagine endopeptidase (AEP) or a cathepsin followed by a trimming event that is solely cathepsin mediated and required for optimal receptor signaling. In terms of processing, palmitoylated by ZDHHC3 in the Golgi regulates TLR9 trafficking from the Golgi to endosomes. Depalmitoylation by PPT1 controls the release of TLR9 from UNC93B1 in endosomes.

The protein localises to the endoplasmic reticulum membrane. It is found in the endosome. The protein resides in the lysosome. It localises to the cytoplasmic vesicle. Its subcellular location is the phagosome. In terms of biological role, key component of innate and adaptive immunity. TLRs (Toll-like receptors) control host immune response against pathogens through recognition of molecular patterns specific to microorganisms. TLR9 is a nucleotide-sensing TLR which is activated by unmethylated cytidine-phosphate-guanosine (CpG) dinucleotides. Acts via MYD88 and TRAF6, leading to NF-kappa-B activation, cytokine secretion and the inflammatory response. Upon CpG stimulation, induces B-cell proliferation, activation, survival and antibody production. The chain is Toll-like receptor 9 (TLR9) from Felis catus (Cat).